The chain runs to 473 residues: Sucrose-6-phosphate hydrolase (473 aa).

Substrate is bound by residues 44–47, Q63, 106–107, 167–168, and E224; these read LLND, YS, and RD. D47 is a catalytic residue.

Belongs to the glycosyl hydrolase 32 family.

The protein resides in the cytoplasm. The catalysed reaction is Hydrolysis of terminal non-reducing beta-D-fructofuranoside residues in beta-D-fructofuranosides.. Its pathway is glycan biosynthesis; sucrose metabolism. The polypeptide is Sucrose-6-phosphate hydrolase (scrB) (Lactococcus lactis subsp. lactis (Streptococcus lactis)).